A 362-amino-acid chain; its full sequence is Beta-ketoacyl-[acyl-carrier-protein] synthase III 2 (362 aa).

Catalysis depends on residues cysteine 113 and histidine 251. An ACP-binding region spans residues 252 to 256 (QANIR). The active site involves asparagine 281.

Belongs to the thiolase-like superfamily. FabH family. In terms of assembly, homodimer.

The protein localises to the cytoplasm. The catalysed reaction is malonyl-[ACP] + acetyl-CoA + H(+) = 3-oxobutanoyl-[ACP] + CO2 + CoA. Its pathway is lipid metabolism; fatty acid biosynthesis. Catalyzes the condensation reaction of fatty acid synthesis by the addition to an acyl acceptor of two carbons from malonyl-ACP. Catalyzes the first condensation reaction which initiates fatty acid synthesis and may therefore play a role in governing the total rate of fatty acid production. Possesses both acetoacetyl-ACP synthase and acetyl transacylase activities. Its substrate specificity determines the biosynthesis of branched-chain and/or straight-chain of fatty acids. This is Beta-ketoacyl-[acyl-carrier-protein] synthase III 2 from Vibrio vulnificus (strain CMCP6).